The following is a 364-amino-acid chain: Chaperone protein DnaJ (364 aa).

The 67-residue stretch at 5–71 folds into the J domain; the sequence is DYYEILGVAK…QKRQAYDQFG (67 aa). The CR-type zinc finger occupies 127–205; it reads GSTVKIRIPK…CRGQGLVRKQ (79 aa). 8 residues coordinate Zn(2+): Cys140, Cys143, Cys157, Cys160, Cys179, Cys182, Cys193, and Cys196. CXXCXGXG motif repeat units follow at residues 140-147, 157-164, 179-186, and 193-200; these read CDTCSGIG, CSICSGVG, CGTCSGTG, and CGTCRGQG.

Belongs to the DnaJ family. As to quaternary structure, homodimer. The cofactor is Zn(2+).

The protein resides in the cytoplasm. Its function is as follows. Participates actively in the response to hyperosmotic and heat shock by preventing the aggregation of stress-denatured proteins and by disaggregating proteins, also in an autonomous, DnaK-independent fashion. Unfolded proteins bind initially to DnaJ; upon interaction with the DnaJ-bound protein, DnaK hydrolyzes its bound ATP, resulting in the formation of a stable complex. GrpE releases ADP from DnaK; ATP binding to DnaK triggers the release of the substrate protein, thus completing the reaction cycle. Several rounds of ATP-dependent interactions between DnaJ, DnaK and GrpE are required for fully efficient folding. Also involved, together with DnaK and GrpE, in the DNA replication of plasmids through activation of initiation proteins. The polypeptide is Chaperone protein DnaJ (Ruthia magnifica subsp. Calyptogena magnifica).